A 265-amino-acid chain; its full sequence is 3-methyl-2-oxobutanoate hydroxymethyltransferase (265 aa).

2 residues coordinate Mg(2+): D43 and D82. Residues 43-44 (DS), D82, and K111 each bind 3-methyl-2-oxobutanoate. E113 lines the Mg(2+) pocket. Catalysis depends on E180, which acts as the Proton acceptor.

The protein belongs to the PanB family. In terms of assembly, homodecamer; pentamer of dimers. Mg(2+) serves as cofactor.

The protein resides in the cytoplasm. It catalyses the reaction 3-methyl-2-oxobutanoate + (6R)-5,10-methylene-5,6,7,8-tetrahydrofolate + H2O = 2-dehydropantoate + (6S)-5,6,7,8-tetrahydrofolate. It functions in the pathway cofactor biosynthesis; (R)-pantothenate biosynthesis; (R)-pantoate from 3-methyl-2-oxobutanoate: step 1/2. Its function is as follows. Catalyzes the reversible reaction in which hydroxymethyl group from 5,10-methylenetetrahydrofolate is transferred onto alpha-ketoisovalerate to form ketopantoate. In Francisella tularensis subsp. holarctica (strain OSU18), this protein is 3-methyl-2-oxobutanoate hydroxymethyltransferase.